Here is a 915-residue protein sequence, read N- to C-terminus: DNA (cytosine-5)-methyltransferase 2 (915 aa).

Over residues 1–14 (MAPSSPSSARPTRA) the composition is skewed to low complexity. The tract at residues 1-171 (MAPSSPSSAR…STAANKPEED (171 aa)) is disordered. The span at 15–30 (SGRERSAMAEEIHQNQ) shows a compositional bias: basic and acidic residues. Positions 42–57 (AKRRRKAASSGKKPKP) are enriched in basic residues. The span at 71-80 (KKGETEKTEP) shows a compositional bias: basic and acidic residues. Residues 81 to 108 (VVDDVCAEEPDEEELAMGEEEAEAEEQA) show a composition bias toward acidic residues. Low complexity predominate over residues 109 to 119 (MQEVVAAVAAG). The 126-residue stretch at 188-313 (IVYCLGDDVY…VAYSTFANIS (126 aa)) folds into the BAH domain. Positions 315-328 (ENGQSGSETASGIS) are enriched in polar residues. Residues 315–338 (ENGQSGSETASGISSDDAGLETSS) form a disordered region. Residues 345–876 (ATLLDLYSGC…YCLGQAYLGE (532 aa)) enclose the SAM-dependent MTase C5-type domain. One can recognise a Chromo domain in the interval 445-508 (FVVQKLIGIR…EGRKRKILPL (64 aa)). Residue Cys521 is part of the active site.

The protein belongs to the class I-like SAM-binding methyltransferase superfamily. C5-methyltransferase family.

The protein resides in the nucleus. It catalyses the reaction a 2'-deoxycytidine in DNA + S-adenosyl-L-methionine = a 5-methyl-2'-deoxycytidine in DNA + S-adenosyl-L-homocysteine + H(+). In terms of biological role, may be involved in the CpXpG methylation and in gene silencing. The chain is DNA (cytosine-5)-methyltransferase 2 (ZMET5) from Zea mays (Maize).